The primary structure comprises 122 residues: Large ribosomal subunit protein bL12 (122 aa).

Belongs to the bacterial ribosomal protein bL12 family. Homodimer. Part of the ribosomal stalk of the 50S ribosomal subunit. Forms a multimeric L10(L12)X complex, where L10 forms an elongated spine to which 2 to 4 L12 dimers bind in a sequential fashion. Binds GTP-bound translation factors.

Its function is as follows. Forms part of the ribosomal stalk which helps the ribosome interact with GTP-bound translation factors. Is thus essential for accurate translation. This Yersinia enterocolitica serotype O:8 / biotype 1B (strain NCTC 13174 / 8081) protein is Large ribosomal subunit protein bL12.